We begin with the raw amino-acid sequence, 258 residues long: tRNA pseudouridine synthase A (258 aa).

The active-site Nucleophile is Asp-54. Tyr-112 is a binding site for substrate.

It belongs to the tRNA pseudouridine synthase TruA family. Homodimer.

The catalysed reaction is uridine(38/39/40) in tRNA = pseudouridine(38/39/40) in tRNA. Functionally, formation of pseudouridine at positions 38, 39 and 40 in the anticodon stem and loop of transfer RNAs. This Geobacillus kaustophilus (strain HTA426) protein is tRNA pseudouridine synthase A.